Here is a 79-residue protein sequence, read N- to C-terminus: ATP synthase subunit c (79 aa).

2 consecutive transmembrane segments (helical) span residues 11–31 (IAVA…IGIL) and 53–73 (FFVV…LGLY).

This sequence belongs to the ATPase C chain family. F-type ATPases have 2 components, F(1) - the catalytic core - and F(0) - the membrane proton channel. F(1) has five subunits: alpha(3), beta(3), gamma(1), delta(1), epsilon(1). F(0) has three main subunits: a(1), b(2) and c(10-14). The alpha and beta chains form an alternating ring which encloses part of the gamma chain. F(1) is attached to F(0) by a central stalk formed by the gamma and epsilon chains, while a peripheral stalk is formed by the delta and b chains.

The protein resides in the cell membrane. Its function is as follows. F(1)F(0) ATP synthase produces ATP from ADP in the presence of a proton or sodium gradient. F-type ATPases consist of two structural domains, F(1) containing the extramembraneous catalytic core and F(0) containing the membrane proton channel, linked together by a central stalk and a peripheral stalk. During catalysis, ATP synthesis in the catalytic domain of F(1) is coupled via a rotary mechanism of the central stalk subunits to proton translocation. Functionally, key component of the F(0) channel; it plays a direct role in translocation across the membrane. A homomeric c-ring of between 10-14 subunits forms the central stalk rotor element with the F(1) delta and epsilon subunits. In Buchnera aphidicola subsp. Schizaphis graminum (strain Sg), this protein is ATP synthase subunit c.